Consider the following 149-residue polypeptide: Large ribosomal subunit protein bL9 (149 aa).

The protein belongs to the bacterial ribosomal protein bL9 family.

Its function is as follows. Binds to the 23S rRNA. The sequence is that of Large ribosomal subunit protein bL9 from Bacillus pumilus (strain SAFR-032).